Here is a 239-residue protein sequence, read N- to C-terminus: Enolase-phosphatase E1 (239 aa).

Residues aspartate 13 and glutamate 15 each coordinate Mg(2+). Substrate is bound by residues 133 to 134 and lysine 170; that span reads SS. Aspartate 196 is a binding site for Mg(2+).

The protein belongs to the HAD-like hydrolase superfamily. MasA/MtnC family. As to quaternary structure, monomer. It depends on Mg(2+) as a cofactor.

It localises to the cytoplasm. Its subcellular location is the nucleus. The enzyme catalyses 5-methylsulfanyl-2,3-dioxopentyl phosphate + H2O = 1,2-dihydroxy-5-(methylsulfanyl)pent-1-en-3-one + phosphate. The protein operates within amino-acid biosynthesis; L-methionine biosynthesis via salvage pathway; L-methionine from S-methyl-5-thio-alpha-D-ribose 1-phosphate: step 3/6. Its pathway is amino-acid biosynthesis; L-methionine biosynthesis via salvage pathway; L-methionine from S-methyl-5-thio-alpha-D-ribose 1-phosphate: step 4/6. Functionally, bifunctional enzyme that catalyzes the enolization of 2,3-diketo-5-methylthiopentyl-1-phosphate (DK-MTP-1-P) into the intermediate 2-hydroxy-3-keto-5-methylthiopentenyl-1-phosphate (HK-MTPenyl-1-P), which is then dephosphorylated to form the acireductone 1,2-dihydroxy-3-keto-5-methylthiopentene (DHK-MTPene). This chain is Enolase-phosphatase E1, found in Chaetomium globosum (strain ATCC 6205 / CBS 148.51 / DSM 1962 / NBRC 6347 / NRRL 1970) (Soil fungus).